A 433-amino-acid polypeptide reads, in one-letter code: UDP-N-acetylmuramoylalanine--D-glutamate ligase (433 aa).

Residue G125–T131 coordinates ATP.

Belongs to the MurCDEF family.

The protein localises to the cytoplasm. The enzyme catalyses UDP-N-acetyl-alpha-D-muramoyl-L-alanine + D-glutamate + ATP = UDP-N-acetyl-alpha-D-muramoyl-L-alanyl-D-glutamate + ADP + phosphate + H(+). Its pathway is cell wall biogenesis; peptidoglycan biosynthesis. In terms of biological role, cell wall formation. Catalyzes the addition of glutamate to the nucleotide precursor UDP-N-acetylmuramoyl-L-alanine (UMA). In Nitratidesulfovibrio vulgaris (strain ATCC 29579 / DSM 644 / CCUG 34227 / NCIMB 8303 / VKM B-1760 / Hildenborough) (Desulfovibrio vulgaris), this protein is UDP-N-acetylmuramoylalanine--D-glutamate ligase.